A 698-amino-acid polypeptide reads, in one-letter code: Epithelial sodium channel subunit alpha (698 aa).

Positions 1 to 70 are disordered; sequence MLDHTRAPEL…SAPRQPTEEE (70 aa). Topologically, residues 1-110 are cytoplasmic; the sequence is MLDHTRAPEL…CSKHNRMKTA (110 aa). The helical transmembrane segment at 111 to 131 threads the bilayer; it reads FWAVLWLCTFGMMYWQFALLF. At 132–589 the chain is on the extracellular side; it reads EEYLSYPVSL…SQWSLWFGSS (458 aa). 3 cysteine pairs are disulfide-bonded: cysteine 158/cysteine 332, cysteine 256/cysteine 263, and cysteine 309/cysteine 316. N-linked (GlcNAc...) asparagine glycosylation occurs at asparagine 190. A gating release of inhibition by proteolysis (GRIP); protease-sensitive region that is responsible for the proteolytic activation of the channel region spans residues 200–270; sequence RRRSSRDLLG…SDCFYQTYSS (71 aa). The tract at residues 213–243 is disordered; it reads HPLQRLRTPPPPYSGRTARSGSSSVRDNNPQ. The span at 229–243 shows a compositional bias: polar residues; it reads TARSGSSSVRDNNPQ. N-linked (GlcNAc...) asparagine glycosylation is present at asparagine 259. Residues asparagine 320, asparagine 339, and asparagine 424 are each glycosylated (N-linked (GlcNAc...) asparagine). 7 cysteine pairs are disulfide-bonded: cysteine 421–cysteine 506, cysteine 443–cysteine 483, cysteine 443–cysteine 502, cysteine 447–cysteine 498, cysteine 456–cysteine 483, cysteine 456–cysteine 506, and cysteine 458–cysteine 472. N-linked (GlcNAc...) asparagine glycosylation is present at asparagine 538. Residues 590 to 610 traverse the membrane as a helical segment; sequence VLSVVEMAELIFDLLVITLLM. Topologically, residues 611–698 are cytoplasmic; it reads LLRRFRSRYW…DCSACALAAL (88 aa). The disordered stretch occupies residues 637-663; it reads ASSFPSRFCPHPTSPPPSLPQQGMTPP. The PY motif; recruits WW domain-containing proteins and is thereby required for ubiquitination and inhibition of the channel by NEDD4 and NEDD4L signature appears at 669 to 673; that stretch reads PPPAY.

The protein belongs to the amiloride-sensitive sodium channel (TC 1.A.6) family. SCNN1A subfamily. Heterotrimer; containing an alpha/SCNN1A, a beta/SCNN1B and a gamma/SCNN1G subunit. Interacts with WWP1 (via WW domains). Interacts with WWP2 (via WW domains); inhibits the channel. Interacts with BPIFA1; the interaction is indirect via SCNN1B and inhibits the proteolytic processing of SCNN1A and SCNN1G and the activation of ENaC. Interacts with the full-length immature form of PCSK9 (pro-PCSK9). Ubiquitinated. Can be ubiquitinated at multiple sites and undergo monoubiquitination and polyubiquitination. Ubiquitination by NEDD4 or NEDD4L inhibits the ENaC channel through endocytosis, intracellular retention and degradation of its individual subunits. In terms of processing, N-glycosylated. Post-translationally, ENaC is activated through the proteolytic maturation of its subunits. Furin cleaves the SCNN1A subunit, which results in a stepwise increase in the open probability of the channel due to the release of an inhibitory tract. BPIFA1, which is recruited by the SCNN1B subunit, prevents the proteolytic activation of ENaC. In terms of tissue distribution, detected in kidney, lung and testis (at protein level). In the testis, detected within the seminiferous tubules but not in the interstitial cells (at protein level).

The protein localises to the apical cell membrane. Its subcellular location is the cell projection. The protein resides in the cilium. It is found in the cytoplasmic granule. It localises to the cytoplasm. The protein localises to the cytoplasmic vesicle. Its subcellular location is the secretory vesicle. The protein resides in the acrosome. It is found in the flagellum. The catalysed reaction is Na(+)(in) = Na(+)(out). With respect to regulation, originally identified and characterized by its inhibition by the diuretic drug amiloride. Functionally, this is one of the three pore-forming subunits of the heterotrimeric epithelial sodium channel (ENaC), a critical regulator of sodium balance and fluid homeostasis. ENaC operates in epithelial tissues, where it mediates the electrodiffusion of sodium ions from extracellular fluid through the apical membrane of cells, with water following osmotically. It plays a key role in maintaining sodium homeostasis through electrogenic sodium reabsorption in the kidneys. Additionally, ENaC is essential for airway surface liquid homeostasis, which is crucial for proper mucus clearance. The polypeptide is Epithelial sodium channel subunit alpha (Rattus norvegicus (Rat)).